Reading from the N-terminus, the 181-residue chain is Small ribosomal subunit protein bS16 (181 aa).

The tract at residues 150–181 is disordered; it reads KKAAEEAAKAAAEAPAEEAAPAEETATEAAAE. Residues 158–181 show a composition bias toward low complexity; that stretch reads KAAAEAPAEEAAPAEETATEAAAE.

This sequence belongs to the bacterial ribosomal protein bS16 family.

The polypeptide is Small ribosomal subunit protein bS16 (Bacteroides fragilis (strain YCH46)).